Consider the following 358-residue polypeptide: Fructose-bisphosphate aldolase 7, cytosolic (358 aa).

Ser2 carries the N-acetylserine modification. Arg52 lines the substrate pocket. Position 68 is an S-glutathionyl cysteine; transient (Cys68). Lys142 provides a ligand contact to substrate. Position 173 is an S-glutathionyl cysteine; transient; alternate (Cys173). Cys173 bears the S-nitrosocysteine; transient; alternate mark. Glu183 serves as the catalytic Proton acceptor. Residue Lys225 is the Schiff-base intermediate with dihydroxyacetone-P of the active site. Residue 266–268 (SGI) participates in substrate binding.

It belongs to the class I fructose-bisphosphate aldolase family. In terms of assembly, homotetramer. In terms of processing, S-glutathionylated at Cys-68 and Cys-173. S-nitrosylated at Cys-173. Highly expressed in flowers, and at lower levels in rosettes leaves and cauline leaves.

Its subcellular location is the cytoplasm. It is found in the cytosol. It catalyses the reaction beta-D-fructose 1,6-bisphosphate = D-glyceraldehyde 3-phosphate + dihydroxyacetone phosphate. It participates in carbohydrate degradation; glycolysis; D-glyceraldehyde 3-phosphate and glycerone phosphate from D-glucose: step 4/4. Its function is as follows. Plays a key role in glycolysis and gluconeogenesis. The sequence is that of Fructose-bisphosphate aldolase 7, cytosolic from Arabidopsis thaliana (Mouse-ear cress).